The following is a 360-amino-acid chain: Alanine racemase (360 aa).

The Proton acceptor; specific for D-alanine role is filled by Lys-36. Residue Lys-36 is modified to N6-(pyridoxal phosphate)lysine. Substrate is bound at residue Arg-132. Tyr-256 (proton acceptor; specific for L-alanine) is an active-site residue. Met-304 is a substrate binding site.

Belongs to the alanine racemase family. Pyridoxal 5'-phosphate is required as a cofactor.

The enzyme catalyses L-alanine = D-alanine. It functions in the pathway amino-acid biosynthesis; D-alanine biosynthesis; D-alanine from L-alanine: step 1/1. Its function is as follows. Catalyzes the interconversion of L-alanine and D-alanine. May also act on other amino acids. The protein is Alanine racemase (alr) of Haemophilus influenzae (strain ATCC 51907 / DSM 11121 / KW20 / Rd).